Reading from the N-terminus, the 502-residue chain is Glutamate--tRNA ligase (502 aa).

The 'HIGH' region motif lies at 21–31 (PSPTGVPHVGM). The 'KMSKS' region motif lies at 265 to 269 (KLSKR). Lys268 is a binding site for ATP.

Belongs to the class-I aminoacyl-tRNA synthetase family. Glutamate--tRNA ligase type 1 subfamily. In terms of assembly, monomer.

The protein localises to the cytoplasm. The catalysed reaction is tRNA(Glu) + L-glutamate + ATP = L-glutamyl-tRNA(Glu) + AMP + diphosphate. In terms of biological role, catalyzes the attachment of glutamate to tRNA(Glu) in a two-step reaction: glutamate is first activated by ATP to form Glu-AMP and then transferred to the acceptor end of tRNA(Glu). In Mycobacterium leprae (strain TN), this protein is Glutamate--tRNA ligase.